A 76-amino-acid chain; its full sequence is Beta-defensin 121 (76 aa).

A signal peptide spans 1 to 15 (MKLLLLLLTVTLLLA). 3 disulfides stabilise this stretch: cysteine 23–cysteine 50, cysteine 30–cysteine 44, and cysteine 34–cysteine 51.

This sequence belongs to the beta-defensin family.

It is found in the secreted. Functionally, has antibacterial activity. The polypeptide is Beta-defensin 121 (DEFB121) (Pan troglodytes (Chimpanzee)).